Consider the following 396-residue polypeptide: Succinyl-CoA:mesaconate CoA-transferase (396 aa).

Asp-175 (nucleophile) is an active-site residue.

The protein belongs to the CoA-transferase III family.

The enzyme catalyses mesaconate + succinyl-CoA = 2-methylfumaryl-CoA + succinate. Functionally, involved in the methylaspartate cycle. Catalyzes the transfer of the CoA moiety from succinyl-CoA to mesaconate to generate mesaconyl-CoA (2-methylfumaryl-CoA) and succinate. This chain is Succinyl-CoA:mesaconate CoA-transferase, found in Haloarcula marismortui (strain ATCC 43049 / DSM 3752 / JCM 8966 / VKM B-1809) (Halobacterium marismortui).